The following is a 161-amino-acid chain: Small ribosomal subunit protein uS9 (161 aa).

It belongs to the universal ribosomal protein uS9 family.

This is Small ribosomal subunit protein uS9 from Rickettsia typhi (strain ATCC VR-144 / Wilmington).